Here is a 175-residue protein sequence, read N- to C-terminus: NAD(P)H-quinone oxidoreductase subunit I, chloroplastic (175 aa).

4Fe-4S ferredoxin-type domains are found at residues 55–84 (GRIH…VNWE) and 95–124 (QTYS…MTEE). [4Fe-4S] cluster is bound by residues Cys64, Cys67, Cys70, Cys74, Cys104, Cys107, Cys110, and Cys114.

Belongs to the complex I 23 kDa subunit family. In terms of assembly, NDH is composed of at least 16 different subunits, 5 of which are encoded in the nucleus. Requires [4Fe-4S] cluster as cofactor.

Its subcellular location is the plastid. The protein resides in the chloroplast thylakoid membrane. The catalysed reaction is a plastoquinone + NADH + (n+1) H(+)(in) = a plastoquinol + NAD(+) + n H(+)(out). It catalyses the reaction a plastoquinone + NADPH + (n+1) H(+)(in) = a plastoquinol + NADP(+) + n H(+)(out). In terms of biological role, NDH shuttles electrons from NAD(P)H:plastoquinone, via FMN and iron-sulfur (Fe-S) centers, to quinones in the photosynthetic chain and possibly in a chloroplast respiratory chain. The immediate electron acceptor for the enzyme in this species is believed to be plastoquinone. Couples the redox reaction to proton translocation, and thus conserves the redox energy in a proton gradient. This is NAD(P)H-quinone oxidoreductase subunit I, chloroplastic from Chlorokybus atmophyticus (Soil alga).